Here is a 401-residue protein sequence, read N- to C-terminus: Homoserine O-acetyltransferase (401 aa).

Residues Asn37–Pro358 form the AB hydrolase-1 domain. The active-site Nucleophile is the Ser146. A substrate-binding site is contributed by Arg215. Catalysis depends on residues Asp318 and His351. Residue Asp352 participates in substrate binding.

This sequence belongs to the AB hydrolase superfamily. MetX family. Homodimer.

It localises to the cytoplasm. The catalysed reaction is L-homoserine + acetyl-CoA = O-acetyl-L-homoserine + CoA. It participates in amino-acid biosynthesis; L-methionine biosynthesis via de novo pathway; O-acetyl-L-homoserine from L-homoserine: step 1/1. Its function is as follows. Transfers an acetyl group from acetyl-CoA to L-homoserine, forming acetyl-L-homoserine. This Natronomonas pharaonis (strain ATCC 35678 / DSM 2160 / CIP 103997 / JCM 8858 / NBRC 14720 / NCIMB 2260 / Gabara) (Halobacterium pharaonis) protein is Homoserine O-acetyltransferase.